The sequence spans 122 residues: Large ribosomal subunit protein uL18 (122 aa).

This sequence belongs to the universal ribosomal protein uL18 family. In terms of assembly, part of the 50S ribosomal subunit; part of the 5S rRNA/L5/L18/L25 subcomplex. Contacts the 5S and 23S rRNAs.

This is one of the proteins that bind and probably mediate the attachment of the 5S RNA into the large ribosomal subunit, where it forms part of the central protuberance. This Lachnoclostridium phytofermentans (strain ATCC 700394 / DSM 18823 / ISDg) (Clostridium phytofermentans) protein is Large ribosomal subunit protein uL18.